The primary structure comprises 118 residues: UPF0344 protein BLi01172/BL01343 (118 aa).

A run of 4 helical transmembrane segments spans residues 6–26 (ITSWVIALILVFVAYGLYSSG), 33–53 (ITHMILRLFYIIVIITGAQLF), 62–82 (EYIAKALLGLITIGFMEMLLI), and 89–109 (AATGIWIGFIVVLLLTVVLGL).

The protein belongs to the UPF0344 family.

The protein localises to the cell membrane. This is UPF0344 protein BLi01172/BL01343 from Bacillus licheniformis (strain ATCC 14580 / DSM 13 / JCM 2505 / CCUG 7422 / NBRC 12200 / NCIMB 9375 / NCTC 10341 / NRRL NRS-1264 / Gibson 46).